The following is a 139-amino-acid chain: uncharacterized protein (139 aa).

It localises to the mitochondrion. This is an uncharacterized protein from Marchantia polymorpha (Common liverwort).